We begin with the raw amino-acid sequence, 31 residues long: Cyclotide vinc-B (31 aa).

Residues 1–31 (GSIPACGESCFKGKCYTPGCTCSKYPLCAKN) constitute a cross-link (cyclopeptide (Gly-Asn)). 3 disulfide bridges follow: Cys6-Cys20, Cys10-Cys22, and Cys15-Cys28.

This sequence belongs to the cyclotide family. In terms of processing, this is a cyclic peptide.

Its function is as follows. Probably participates in a plant defense mechanism. The polypeptide is Cyclotide vinc-B (Viola inconspicua).